Reading from the N-terminus, the 376-residue chain is Chaperone protein DnaJ (376 aa).

Residues 5-70 enclose the J domain; sequence DYYEVLGVGR…DKKAAYDQFG (66 aa). The segment at 132-210 adopts a CR-type zinc-finger fold; it reads GLTKELRIPT…CHGEGRVEKS (79 aa). Zn(2+)-binding residues include cysteine 145, cysteine 148, cysteine 162, cysteine 165, cysteine 184, cysteine 187, cysteine 198, and cysteine 201. 4 CXXCXGXG motif repeats span residues 145-152, 162-169, 184-191, and 198-205; these read CDSCDGSG, CGTCHGQG, CPTCHGRG, and CNKCHGEG.

The protein belongs to the DnaJ family. Homodimer. Zn(2+) is required as a cofactor.

It is found in the cytoplasm. Functionally, participates actively in the response to hyperosmotic and heat shock by preventing the aggregation of stress-denatured proteins and by disaggregating proteins, also in an autonomous, DnaK-independent fashion. Unfolded proteins bind initially to DnaJ; upon interaction with the DnaJ-bound protein, DnaK hydrolyzes its bound ATP, resulting in the formation of a stable complex. GrpE releases ADP from DnaK; ATP binding to DnaK triggers the release of the substrate protein, thus completing the reaction cycle. Several rounds of ATP-dependent interactions between DnaJ, DnaK and GrpE are required for fully efficient folding. Also involved, together with DnaK and GrpE, in the DNA replication of plasmids through activation of initiation proteins. This chain is Chaperone protein DnaJ, found in Shewanella pealeana (strain ATCC 700345 / ANG-SQ1).